The chain runs to 171 residues: S-ribosylhomocysteine lyase (171 aa).

H54, H58, and C128 together coordinate Fe cation.

This sequence belongs to the LuxS family. In terms of assembly, homodimer. The cofactor is Fe cation.

It carries out the reaction S-(5-deoxy-D-ribos-5-yl)-L-homocysteine = (S)-4,5-dihydroxypentane-2,3-dione + L-homocysteine. Its function is as follows. Involved in the synthesis of autoinducer 2 (AI-2) which is secreted by bacteria and is used to communicate both the cell density and the metabolic potential of the environment. The regulation of gene expression in response to changes in cell density is called quorum sensing. Catalyzes the transformation of S-ribosylhomocysteine (RHC) to homocysteine (HC) and 4,5-dihydroxy-2,3-pentadione (DPD). The polypeptide is S-ribosylhomocysteine lyase (Campylobacter curvus (strain 525.92)).